Consider the following 142-residue polypeptide: Hemoglobin subunit alpha-1 (142 aa).

N-acetylserine is present on Ser1. The region spanning Ser1 to Arg142 is the Globin domain. His59 contacts O2. His88 provides a ligand contact to heme b.

The protein belongs to the globin family. Hb1 is a heterotetramer of two alpha-1 chains and two beta chains. HbC is a heterotetramer of two alpha-1 chains and two beta-C chains. As to expression, red blood cells.

Functionally, involved in oxygen transport from gills to the various peripheral tissues. This is Hemoglobin subunit alpha-1 (hba1) from Trematomus newnesi (Dusky notothen).